Reading from the N-terminus, the 173-residue chain is Plasmolipin (173 aa).

Residues 1-34 (MADFPGKVSTQTSSQEPQRSFAISSSVDMGFIKS) are Cytoplasmic-facing. The MARVEL domain occupies 31-160 (FIKSIPGILL…SSYFAYLGWR (130 aa)). The helical transmembrane segment at 35-55 (IPGILLIAEIVVGLLVWTLIA) threads the bilayer. Residues 56 to 67 (STPHYLIPALGW) are Extracellular-facing. Residues 68 to 88 (VLFVSITLWLLSIALLVILLL) traverse the membrane as a helical segment. The Cytoplasmic portion of the chain corresponds to 89 to 98 (SLHQRLPSVP). Residues 99-119 (WPLVLLVFYSVAALLYLTAFL) form a helical membrane-spanning segment. Topologically, residues 120 to 138 (ANAATVPGGYYQGHLGASA) are extracellular. Residues 139–159 (FFGIVETLLYTASSYFAYLGW) form a helical membrane-spanning segment. At 160-173 (RGEGQNAAGSTVPV) the chain is on the cytoplasmic side.

This sequence belongs to the MAL family. As to quaternary structure, forms oligomers. As to expression, expressed in the posterior midgut.

It is found in the cell membrane. It localises to the myelin membrane. The protein localises to the apical cell membrane. The protein resides in the recycling endosome membrane. Its subcellular location is the vesicle. In terms of biological role, main component of the myelin sheath that plays an important role in myelin membrane biogenesis and myelination. Plays an essential function in apical endocytosis. Plays an important role by activating the Notch signaling pathway, which is essential for cell differentiation and results in correct patterning of the intestinal epithelium, particularly of the posterior gut absorptive cells. This is Plasmolipin (pllp) from Danio rerio (Zebrafish).